Consider the following 93-residue polypeptide: Putative pterin-4-alpha-carbinolamine dehydratase (93 aa).

It belongs to the pterin-4-alpha-carbinolamine dehydratase family.

The enzyme catalyses (4aS,6R)-4a-hydroxy-L-erythro-5,6,7,8-tetrahydrobiopterin = (6R)-L-erythro-6,7-dihydrobiopterin + H2O. The sequence is that of Putative pterin-4-alpha-carbinolamine dehydratase from Chloroflexus aurantiacus (strain ATCC 29366 / DSM 635 / J-10-fl).